Reading from the N-terminus, the 373-residue chain is MAKRDYYEVLGVNRDATDEEIKKAYRKLAMKYHPDRNPDNPKAEEHFKEAKEAYEVLSDDQKRAAYDQYGHAGVDPSAAAGAGAGGFGNFADAFGDIFGDIFGGGGGGRRSNVYRGADLRYNMEISLEEAARGTETKIRIPVMAECETCHGSGARPGTQPVTCSTCGGHGQVRMQQGFFSVQQTCPKCHGSGKMVKDPCPTCHGGGRVKQHKTLSVKIPAGVDEGDRIRLSGEGEAGVNGGPPGDLYVVVHLKKHPIFERDGANLHCEMPISFTTAALGGEIEIPTLDGHAKMKVPPETQTGAVFRLRGKGIKPLRSNEHGDLFCHVIVETPVKLTERQKELLRELEDINQQDSGKHSPREKSWMTKVKDFFQ.

Positions 5 to 70 (DYYEVLGVNR…QKRAAYDQYG (66 aa)) constitute a J domain. The segment at 133–211 (GTETKIRIPV…CHGGGRVKQH (79 aa)) adopts a CR-type zinc-finger fold. Zn(2+)-binding residues include cysteine 146, cysteine 149, cysteine 163, cysteine 166, cysteine 185, cysteine 188, cysteine 199, and cysteine 202. CXXCXGXG motif repeat units follow at residues 146 to 153 (CETCHGSG), 163 to 170 (CSTCGGHG), 185 to 192 (CPKCHGSG), and 199 to 206 (CPTCHGGG). The interval 346–373 (LEDINQQDSGKHSPREKSWMTKVKDFFQ) is disordered. Residues 354–373 (SGKHSPREKSWMTKVKDFFQ) are compositionally biased toward basic and acidic residues.

The protein belongs to the DnaJ family. Homodimer. Zn(2+) is required as a cofactor.

Its subcellular location is the cytoplasm. Functionally, participates actively in the response to hyperosmotic and heat shock by preventing the aggregation of stress-denatured proteins and by disaggregating proteins, also in an autonomous, DnaK-independent fashion. Unfolded proteins bind initially to DnaJ; upon interaction with the DnaJ-bound protein, DnaK hydrolyzes its bound ATP, resulting in the formation of a stable complex. GrpE releases ADP from DnaK; ATP binding to DnaK triggers the release of the substrate protein, thus completing the reaction cycle. Several rounds of ATP-dependent interactions between DnaJ, DnaK and GrpE are required for fully efficient folding. Also involved, together with DnaK and GrpE, in the DNA replication of plasmids through activation of initiation proteins. The chain is Chaperone protein DnaJ from Methylobacillus flagellatus (strain ATCC 51484 / DSM 6875 / VKM B-1610 / KT).